Consider the following 199-residue polypeptide: Putative pseudouridine methyltransferase (199 aa).

Residues leucine 132 and cysteine 186 each coordinate S-adenosyl-L-methionine.

The protein belongs to the methyltransferase superfamily. TrmY family.

It localises to the cytoplasm. This Vibrio parahaemolyticus serotype O3:K6 (strain RIMD 2210633) protein is Putative pseudouridine methyltransferase.